The following is a 472-amino-acid chain: Zinc finger imprinted 3 (472 aa).

Positions 8–80 (VTFEDVTVNF…EEEVLGSGRA (73 aa)) constitute a KRAB domain. 11 C2H2-type zinc fingers span residues 167–189 (LKCN…LRRH), 195–217 (FECH…QKTH), 223–245 (YKCE…QKMH), 251–273 (YQCK…EKIH), 279–301 (YQCN…KKVH), 307–329 (FQCT…QRIH), 335–357 (YKCS…EKIH), 363–385 (YECD…KKIH), 391–413 (YECN…QKTH), 419–441 (YRCS…KKTH), and 447–470 (YGCS…KRIH).

Belongs to the krueppel C2H2-type zinc-finger protein family.

The protein localises to the nucleus. May be involved in transcriptional regulation. This is Zinc finger imprinted 3 (ZIM3) from Homo sapiens (Human).